Consider the following 194-residue polypeptide: Clathrin light chain (194 aa).

The disordered stretch occupies residues 44–156 (TTFDNSNNNN…TDSTSGNTTH (113 aa)). Positions 48-65 (NSNNNNNNNNHNNNSYNS) are enriched in low complexity. Basic and acidic residues-rich tracts occupy residues 89-115 (EYLEKHEKEMQEKKKKSEEKRQKKIAE) and 124-146 (YSEREAKKKTALKNNRDHNKSLE). Positions 124–194 (YSEREAKKKT…LIRLKNQPIV (71 aa)) are required for binding clathrin heavy chain, localization to punctae, and for cytokinesis and fruiting body development. The segment covering 147-156 (TDSTSGNTTH) has biased composition (polar residues).

Belongs to the clathrin light chain family. As to quaternary structure, clathrin coats are formed from molecules containing 3 heavy chains and 3 light chains.

Its subcellular location is the cytoplasmic vesicle membrane. The protein resides in the membrane. It localises to the coated pit. Clathrin is the major protein of the polyhedral coat of coated pits and vesicles. In Dictyostelium discoideum (Social amoeba), this protein is Clathrin light chain (clc).